Here is a 125-residue protein sequence, read N- to C-terminus: Small ribosomal subunit protein bS6 (125 aa).

It belongs to the bacterial ribosomal protein bS6 family.

Binds together with bS18 to 16S ribosomal RNA. This chain is Small ribosomal subunit protein bS6 (rpsF), found in Campylobacter jejuni subsp. jejuni serotype O:2 (strain ATCC 700819 / NCTC 11168).